Consider the following 1471-residue polypeptide: Myosin-51 (1471 aa).

Positions 7–61 (SVGSECWVSNNNGHWDAARLIEIKDNGGGKVVATVAKSSGVLETVNYQQLQNRNI) constitute a Myosin N-terminal SH3-like domain. Positions 65 to 749 (ESPSDLTNLP…VIGNFEEAHR (685 aa)) constitute a Myosin motor domain. An ATP-binding site is contributed by 159-166 (GESGAGKT). Positions 628 to 650 (LSQLMTTVSSTNVHYIRCIKPNE) are actin-binding. IQ domains are found at residues 753-773 (SKSTVLLQSAIRGFFTRKEYQ), 776-796 (VKFIIKLQSVIMGWLTRQRFE), 801-821 (ERAAILIQAHWRSYIQRKRYL), 824-844 (IKCAIVIQSIVRKNIAYSRYI), 849-869 (ESSATLLAKFWRAYNARKTFR), and 872-892 (KKSVIALQCVSRSVLTRRYLR). The stretch at 909 to 952 (KNLQASITEVSKQLKSNSKKVTVLRNKLNILNNSLSKWKCLIKK) forms a coiled coil. Residues 1171-1417 (EKPLQAVLYW…SKAVEALSCK (247 aa)) enclose the Dilute domain.

The protein belongs to the TRAFAC class myosin-kinesin ATPase superfamily. Myosin family.

The protein resides in the cytoplasm. Its function is as follows. Involved in cytokinesis. The protein is Myosin-51 (myo51) of Schizosaccharomyces pombe (strain 972 / ATCC 24843) (Fission yeast).